Here is a 633-residue protein sequence, read N- to C-terminus: Threonine--tRNA ligase (633 aa).

In terms of domain architecture, TGS spans 1 to 61 (MINISFPDGS…DNDCRLRILT (61 aa)). The interval 242–533 (DHRKLGKELD…LIEEYAGRFP (292 aa)) is catalytic. Residues cysteine 333, histidine 384, and histidine 510 each coordinate Zn(2+).

The protein belongs to the class-II aminoacyl-tRNA synthetase family. As to quaternary structure, homodimer. It depends on Zn(2+) as a cofactor.

Its subcellular location is the cytoplasm. It catalyses the reaction tRNA(Thr) + L-threonine + ATP = L-threonyl-tRNA(Thr) + AMP + diphosphate + H(+). Its function is as follows. Catalyzes the attachment of threonine to tRNA(Thr) in a two-step reaction: L-threonine is first activated by ATP to form Thr-AMP and then transferred to the acceptor end of tRNA(Thr). Also edits incorrectly charged L-seryl-tRNA(Thr). The chain is Threonine--tRNA ligase from Rickettsia bellii (strain OSU 85-389).